Reading from the N-terminus, the 475-residue chain is MADKIDISLYEKARIVVYGDIMLDRYWYGQASRISPEAPIPVVNVDQIEARPGGAANVALNVVALGASVELMGVVGDDQESRELETLLNKKSINCHFHRLNDHPTVTKLRVLGQNQQLLRLDFEKTLKHYEDKGLLQRYQHSLSHAQAVILSDYAKGALFNVTALIQRAREKGLPVLVDPKSVDFSRYAGATLLTPNLKEFEAVVGHCRTDQELESKARALIHQYRFEAILITRGKQGMMLIQKEGAAINLVAHAREVYDVTGAGDTVIAVMAASLAAGGDFYEAAQLANLAAGLVVRKLGAATVTVPELRRALHQITASHHGILSEKALLLAVADARAHGETIVMTNGCFDILHAGHVHYLEAAKAMGHRLIVAVNDDNSVRRLKGKDRPINSLQARMEVLTALRAIDWVVPFSEDTPARLITEVLPNILVKGGDYQPSQIAGGDEVVKNGGKVLTIPIKEGFSTSRLVEKMLN.

The ribokinase stretch occupies residues 1-321; that stretch reads MADKIDISLY…RALHQITASH (321 aa). 197–200 is a binding site for ATP; that stretch reads NLKE. The active site involves Asp266. The interval 346-475 is cytidylyltransferase; sequence MTNGCFDILH…TSRLVEKMLN (130 aa).

It in the N-terminal section; belongs to the carbohydrate kinase PfkB family. The protein in the C-terminal section; belongs to the cytidylyltransferase family. As to quaternary structure, homodimer.

The enzyme catalyses D-glycero-beta-D-manno-heptose 7-phosphate + ATP = D-glycero-beta-D-manno-heptose 1,7-bisphosphate + ADP + H(+). It carries out the reaction D-glycero-beta-D-manno-heptose 1-phosphate + ATP + H(+) = ADP-D-glycero-beta-D-manno-heptose + diphosphate. It functions in the pathway nucleotide-sugar biosynthesis; ADP-L-glycero-beta-D-manno-heptose biosynthesis; ADP-L-glycero-beta-D-manno-heptose from D-glycero-beta-D-manno-heptose 7-phosphate: step 1/4. It participates in nucleotide-sugar biosynthesis; ADP-L-glycero-beta-D-manno-heptose biosynthesis; ADP-L-glycero-beta-D-manno-heptose from D-glycero-beta-D-manno-heptose 7-phosphate: step 3/4. Functionally, catalyzes the phosphorylation of D-glycero-D-manno-heptose 7-phosphate at the C-1 position to selectively form D-glycero-beta-D-manno-heptose-1,7-bisphosphate. Its function is as follows. Catalyzes the ADP transfer from ATP to D-glycero-beta-D-manno-heptose 1-phosphate, yielding ADP-D-glycero-beta-D-manno-heptose. This chain is Bifunctional protein HldE, found in Coxiella burnetii (strain Dugway 5J108-111).